A 114-amino-acid chain; its full sequence is Large ribosomal subunit protein bL19 (114 aa).

Belongs to the bacterial ribosomal protein bL19 family.

Functionally, this protein is located at the 30S-50S ribosomal subunit interface and may play a role in the structure and function of the aminoacyl-tRNA binding site. This chain is Large ribosomal subunit protein bL19 (rplS), found in Listeria monocytogenes serovar 1/2a (strain ATCC BAA-679 / EGD-e).